Here is a 180-residue protein sequence, read N- to C-terminus: NADH-quinone oxidoreductase subunit I 1 (180 aa).

4Fe-4S ferredoxin-type domains lie at 50 to 80 and 90 to 119; these read LSRD…LQKT and EFFR…LTPD. Residues Cys-60, Cys-63, Cys-66, Cys-70, Cys-99, Cys-102, Cys-105, and Cys-109 each coordinate [4Fe-4S] cluster.

It belongs to the complex I 23 kDa subunit family. NDH-1 is composed of 14 different subunits. Subunits NuoA, H, J, K, L, M, N constitute the membrane sector of the complex. Requires [4Fe-4S] cluster as cofactor.

The protein resides in the cell inner membrane. It carries out the reaction a quinone + NADH + 5 H(+)(in) = a quinol + NAD(+) + 4 H(+)(out). NDH-1 shuttles electrons from NADH, via FMN and iron-sulfur (Fe-S) centers, to quinones in the respiratory chain. The immediate electron acceptor for the enzyme in this species is believed to be ubiquinone. Couples the redox reaction to proton translocation (for every two electrons transferred, four hydrogen ions are translocated across the cytoplasmic membrane), and thus conserves the redox energy in a proton gradient. This Nitrosococcus oceani (strain ATCC 19707 / BCRC 17464 / JCM 30415 / NCIMB 11848 / C-107) protein is NADH-quinone oxidoreductase subunit I 1.